Reading from the N-terminus, the 433-residue chain is LanC-like protein GCL1 (433 aa).

The interval methionine 1–glycine 22 is disordered.

This sequence belongs to the LanC-like protein family.

Functionally, may play a role in signaling. May be not involved in abscisic acid (ABA) signaling. This Arabidopsis thaliana (Mouse-ear cress) protein is LanC-like protein GCL1 (GCL1).